The chain runs to 523 residues: MFSEVKVLQIVLVQWLTLFSFTYNSHGTYILDGSAVFNENSYLVLTNTTKHSYGQAFDNTTFEMKDQSFSINFFFAIVPEHKQQGSHGMTFAFSPTRGLPGASSDQYLGLFNKTNNGKTSNHVIAIELDIHKDEEFEDIDDNHVGININGLRSVASASAGYYDDNDGSFKNLSLISGKLMRLSIVYSHPDTKLDVTLCPAEFLVPPRKPLLSLNRDLSQYVLKHMHIGFTASTGSIRALHYMVLVYTYPEAVYQPLEFGRVPTLPPYPKKPSDRLRTVLAVCLTLALFAVFLASGIGFVFYLRHKKVKEVLEEWEIQCGPHRFSYKELFNATKGFKEKQLLGKGGFGQVYKGTLPGSDAEIAVKRTSHDSRQGMSEFLAEISTIGRLRHPNLVRLLGYCKHKENLYLVYDFMPNGSLDKYLNRSNTNENQERLTWEQRFKIIKDVASALLHLHQEWVQVIIHRDIKPANVLIDHDMNARLGDFGLAKLYDQGFDPQTSRVAGTFGYIAPEFLRTGRAVRVKFF.

Residues 1-27 (MFSEVKVLQIVLVQWLTLFSFTYNSHG) form the signal peptide. The segment at 28–242 (TYILDGSAVF…TGSIRALHYM (215 aa)) is legume-lectin like. Over 28–279 (TYILDGSAVF…KPSDRLRTVL (252 aa)) the chain is Extracellular. Residues asparagine 47, asparagine 59, asparagine 112, and asparagine 171 are each glycosylated (N-linked (GlcNAc...) asparagine). A helical membrane pass occupies residues 280–300 (AVCLTLALFAVFLASGIGFVF). Residues 301 to 523 (YLRHKKVKEV…TGRAVRVKFF (223 aa)) lie on the Cytoplasmic side of the membrane. In terms of domain architecture, Protein kinase spans 335-523 (FKEKQLLGKG…TGRAVRVKFF (189 aa)). Residues 341-349 (LGKGGFGQV) and lysine 364 contribute to the ATP site. Residue aspartate 464 is the Proton acceptor of the active site.

This sequence in the C-terminal section; belongs to the protein kinase superfamily. Ser/Thr protein kinase family. In the N-terminal section; belongs to the leguminous lectin family.

It is found in the cell membrane. The enzyme catalyses L-seryl-[protein] + ATP = O-phospho-L-seryl-[protein] + ADP + H(+). It carries out the reaction L-threonyl-[protein] + ATP = O-phospho-L-threonyl-[protein] + ADP + H(+). The polypeptide is Putative L-type lectin-domain containing receptor kinase V.6 (LECRK56) (Arabidopsis thaliana (Mouse-ear cress)).